Reading from the N-terminus, the 468-residue chain is Chromosomal replication initiator protein DnaA (468 aa).

The interval 1-84 is domain I, interacts with DnaA modulators; that stretch reads MSSSLWLQCL…RFEVGSKPIS (84 aa). Residues 84–131 are domain II; that stretch reads SAPPRPQRTAADVAAATSAPAQMQARQSLHKPWESRGPEPVDDLNHRS. Positions 112–132 are disordered; sequence LHKPWESRGPEPVDDLNHRSN. Over residues 114 to 129 the composition is skewed to basic and acidic residues; sequence KPWESRGPEPVDDLNH. Residues 132–348 form a domain III, AAA+ region region; sequence NVNPKHKFTN…GALNRVVANA (217 aa). Positions 176, 178, 179, and 180 each coordinate ATP. The tract at residues 349–468 is domain IV, binds dsDNA; it reads NFTGRAITID…YSNLIRTLSS (120 aa).

This sequence belongs to the DnaA family. As to quaternary structure, oligomerizes as a right-handed, spiral filament on DNA at oriC.

The protein resides in the cytoplasm. In terms of biological role, plays an essential role in the initiation and regulation of chromosomal replication. ATP-DnaA binds to the origin of replication (oriC) to initiate formation of the DNA replication initiation complex once per cell cycle. Binds the DnaA box (a 9 base pair repeat at the origin) and separates the double-stranded (ds)DNA. Forms a right-handed helical filament on oriC DNA; dsDNA binds to the exterior of the filament while single-stranded (ss)DNA is stabiized in the filament's interior. The ATP-DnaA-oriC complex binds and stabilizes one strand of the AT-rich DNA unwinding element (DUE), permitting loading of DNA polymerase. After initiation quickly degrades to an ADP-DnaA complex that is not apt for DNA replication. Binds acidic phospholipids. The chain is Chromosomal replication initiator protein DnaA from Aliivibrio salmonicida (strain LFI1238) (Vibrio salmonicida (strain LFI1238)).